Here is an 887-residue protein sequence, read N- to C-terminus: PAN2-PAN3 deadenylation complex subunit PAN3 (887 aa).

A C3H1-type zinc finger spans residues 43-71 (GVKLKYCRYYAKDKTCFYGEECQFLHEDP). Disordered stretches follow at residues 102–147 (AVAG…IPGM), 284–307 (QTPN…SNVS), and 325–392 (SPAT…SGQV). Gly residues predominate over residues 122 to 138 (PGTGAAAGGGGSSGGLD). A necessary and sufficient for interaction with PABPC1 but not needed for interaction with PAN2 region spans residues 147–498 (MDGGALTDTS…PPPNRIQKSS (352 aa)). The PABPC-interacting motif-2 (PAM-2) motif lies at 284–299 (QTPNPTASEFIPKGGS). The span at 298-307 (GSTSRLSNVS) shows a compositional bias: polar residues. Phosphoserine occurs at positions 354 and 361. A compositionally biased stretch (polar residues) spans 363-392 (TPNPASYMVPSSASTSVNNPVSQTPSSGQV). Residues 463–750 (QIDQADMPAV…SVNDIMPMIG (288 aa)) form a pseudokinase domain region. Residues Arg521, 570–577 (DFHAGGET), and 644–645 (TK) each bind ATP. Residues 751–789 (ARFYTQLDAAQMRNDVIEEDLAKEVQNGRLFRLLAKLGT) adopt a coiled-coil conformation. The knob domain stretch occupies residues 790–887 (INERPEFQKD…ELIAAANGQL (98 aa)).

It belongs to the protein kinase superfamily. PAN3 family. Homodimer. Forms a heterotrimer with a catalytic subunit PAN2 to form the poly(A)-nuclease (PAN) deadenylation complex. Interacts (via PAM-2 motif) with poly(A)-binding protein PABPC1 (via PABC domain), conferring substrate specificity of the enzyme complex. Interacts with the GW182 family proteins TNRC6A, TNRC6B and TNRC6. Interacts with YTHDF3. In terms of assembly, interacts with PAN2. Interacts (via N-terminus) with PABPC1 at lower efficiency than isoform 3. As to quaternary structure, interacts with PAN2. Interacts (via N-terminus) with PABPC1 at higher efficiency than isoform 1.

The protein localises to the cytoplasm. The protein resides in the P-body. It is found in the nucleus. Its function is as follows. Regulatory subunit of the poly(A)-nuclease (PAN) deadenylation complex, one of two cytoplasmic mRNA deadenylases involved in general and miRNA-mediated mRNA turnover. PAN specifically shortens poly(A) tails of RNA and the activity is stimulated by poly(A)-binding protein (PABP). PAN deadenylation is followed by rapid degradation of the shortened mRNA tails by the CCR4-NOT complex. Deadenylated mRNAs are then degraded by two alternative mechanisms, namely exosome-mediated 3'-5' exonucleolytic degradation, or deadenylation-dependent mRNA decapping and subsequent 5'-3' exonucleolytic degradation by XRN1. PAN3 acts as a regulator for PAN activity, recruiting the catalytic subunit PAN2 to mRNA via its interaction with RNA and PABP, and to miRNA targets via its interaction with GW182 family proteins. Functionally, decreases PAN2-mediated deadenylation, possibly by preventing progression into the second CCR4-NOT mediated stage of biphasic deadenylation. Has a significant effect on mRNA stability, generally stabilizing a subset of the transcriptome. Stabilizes mRNAs degraded by the AU-rich element (ARE)-mediated mRNA decay pathway but promotes degradation of mRNAs by the microRNA-mediated pathway. Its activity influences mRNP remodeling, specifically reducing formation of a subset of P-bodies containing GW220, an isoform of TNRC6A. Enhances PAN2 deadenylase activity and has an extensive effect on mRNA stability, generally enhancing mRNA decay across the transcriptome by multiple pathways, including the AU-rich element (ARE)-mediated pathway, microRNA-mediated pathway and the nonsense-mediated pathway (NMD). Its activity is required for efficient P-body formation. May be involved in regulating mRNAs of genes involved in cell cycle progression and cell proliferation. The chain is PAN2-PAN3 deadenylation complex subunit PAN3 from Homo sapiens (Human).